A 257-amino-acid chain; its full sequence is Zinc transporter ZupT (257 aa).

The next 8 helical transmembrane spans lie at 5–25 (LILT…GVLG), 32–52 (VLAF…LMEM), 61–81 (GMSP…YFGL), 109–129 (AILL…ATFV), 137–157 (LGFG…LAVA), 171–191 (IFWA…AWLI), 195–215 (LVSP…MVAL), and 236–256 (GVLC…TIGI). Fe(2+) contacts are provided by asparagine 120 and glutamate 123. Positions 123 and 148 each coordinate Zn(2+). Fe(2+) contacts are provided by asparagine 149, glutamate 152, and glutamate 181. Zn(2+) is bound at residue glutamate 152.

The protein belongs to the ZIP transporter (TC 2.A.5) family. ZupT subfamily.

The protein localises to the cell inner membrane. The catalysed reaction is Zn(2+)(in) = Zn(2+)(out). Mediates zinc uptake. May also transport other divalent cations. The polypeptide is Zinc transporter ZupT (Salmonella heidelberg (strain SL476)).